The chain runs to 437 residues: Phosphomethylpyrimidine synthase (437 aa).

Residues asparagine 69, methionine 98, tyrosine 127, histidine 163, 185 to 187 (SRG), 226 to 229 (DACR), and glutamate 265 each bind substrate. Histidine 269 is a Zn(2+) binding site. Tyrosine 292 is a binding site for substrate. Zn(2+) is bound at residue histidine 333. [4Fe-4S] cluster-binding residues include cysteine 409, cysteine 412, and cysteine 416.

It belongs to the ThiC family. Requires [4Fe-4S] cluster as cofactor.

The enzyme catalyses 5-amino-1-(5-phospho-beta-D-ribosyl)imidazole + S-adenosyl-L-methionine = 4-amino-2-methyl-5-(phosphooxymethyl)pyrimidine + CO + 5'-deoxyadenosine + formate + L-methionine + 3 H(+). It functions in the pathway cofactor biosynthesis; thiamine diphosphate biosynthesis. Catalyzes the synthesis of the hydroxymethylpyrimidine phosphate (HMP-P) moiety of thiamine from aminoimidazole ribotide (AIR) in a radical S-adenosyl-L-methionine (SAM)-dependent reaction. The polypeptide is Phosphomethylpyrimidine synthase (Clostridium novyi (strain NT)).